Reading from the N-terminus, the 426-residue chain is Probable auxin efflux carrier component 9 (426 aa).

Over 1-6 (MITGSE) the chain is Extracellular. Residues 7–27 (VYQVVEAMAPLYTAAALGYGS) traverse the membrane as a helical segment. The Cytoplasmic portion of the chain corresponds to 28-38 (VRWLKAFSNEQ). Residues 39–59 (CAGINHFVALYAVPVLIFDMV) traverse the membrane as a helical segment. (indol-3-yl)acetate is bound at residue Val51. At 60 to 70 (STNNVYKMNGR) the chain is on the extracellular side. Residues 71–91 (LIAADTLQKAVLLLGLMAWAL) form a helical membrane-spanning segment. Over 92 to 114 (WERSRARGAGAKAKAAVSSPLQW) the chain is Cytoplasmic. Residues 115–135 (VITCFSVASLPNTIIMGVPLL) form a helical membrane-spanning segment. (indol-3-yl)acetate contacts are provided by Asn126 and Ile128. At 136–145 (NGMYGPVSKD) the chain is on the extracellular side. A helical membrane pass occupies residues 146 to 166 (LMKQIVVMQFCIWYNVIIFLY). Tyr159 is a binding site for (indol-3-yl)acetate. The Cytoplasmic segment spans residues 167–286 (EYMAARRSAS…LLQIPNTYAS (120 aa)). A disordered region spans residues 232–258 (RDGVSGETTAAAKEVSSGEVAPVEEEE). Residues 287–307 (FLGLIWSLIAFKCGFSMPKIV) form a helical membrane-spanning segment. The Extracellular portion of the chain corresponds to 308-310 (EDS). The helical transmembrane segment at 311-331 (LFTIRTTAVGLSMFSSGTFIA) threads the bilayer. At 332–347 (RQSRFVPCGYKIASFS) the chain is on the cytoplasmic side. The chain crosses the membrane as a helical span at residues 348–368 (MVIKFLIGPVVMLFASLVIGM). The Extracellular portion of the chain corresponds to 369-371 (HGT). The helical transmembrane segment at 372–392 (LLHIAVVQAALPLAVTSFVYA) threads the bilayer. Val386 is a (indol-3-yl)acetate binding site. Topologically, residues 393–405 (EEYKVHADIMSTG) are cytoplasmic. The chain crosses the membrane as a helical span at residues 406–426 (VILGIFISLPVTIVYYILLGL).

Belongs to the auxin efflux carrier (TC 2.A.69.1) family. As to quaternary structure, homodimer. As to expression, expressed in roots, leaves and shoot apex. Expressed in roots, stem bases, stems, leaves and young panicles.

The protein resides in the membrane. Its function is as follows. May act as a component of the auxin efflux carrier. The protein is Probable auxin efflux carrier component 9 of Oryza sativa subsp. japonica (Rice).